Reading from the N-terminus, the 653-residue chain is DNA ligase (653 aa).

NAD(+)-binding positions include 32 to 36 and 80 to 81; these read NFEYD and SL. Lys-104 (N6-AMP-lysine intermediate) is an active-site residue. Positions 125, 159, and 297 each coordinate NAD(+). Zn(2+) contacts are provided by Cys-386, Cys-389, Cys-406, and Cys-411. One can recognise a BRCT domain in the interval 571–653; that stretch reads GGSEKLKGLT…EEFIQLLNEA (83 aa).

It belongs to the NAD-dependent DNA ligase family. LigA subfamily. The cofactor is Mg(2+). Requires Mn(2+) as cofactor.

The catalysed reaction is NAD(+) + (deoxyribonucleotide)n-3'-hydroxyl + 5'-phospho-(deoxyribonucleotide)m = (deoxyribonucleotide)n+m + AMP + beta-nicotinamide D-nucleotide.. Functionally, DNA ligase that catalyzes the formation of phosphodiester linkages between 5'-phosphoryl and 3'-hydroxyl groups in double-stranded DNA using NAD as a coenzyme and as the energy source for the reaction. It is essential for DNA replication and repair of damaged DNA. This chain is DNA ligase, found in Lachnoclostridium phytofermentans (strain ATCC 700394 / DSM 18823 / ISDg) (Clostridium phytofermentans).